We begin with the raw amino-acid sequence, 906 residues long: Protein translocase subunit SecA (906 aa).

Residues Q86, 104-108, and D511 contribute to the ATP site; that span reads GEGKT. Basic and acidic residues-rich tracts occupy residues 853–865 and 877–888; these read HESV…RHDE and VRREGPKVKRND. Positions 853–906 are disordered; the sequence is HESVIDNNQRHDEDEQEEAPKVQQVRREGPKVKRNDPCPCGSGKKYKQCHSKVE. C890, C892, C901, and H902 together coordinate Zn(2+). Basic residues predominate over residues 896-906; the sequence is KKYKQCHSKVE.

Belongs to the SecA family. Monomer and homodimer. Part of the essential Sec protein translocation apparatus which comprises SecA, SecYEG and auxiliary proteins SecDF-YajC and YidC. Zn(2+) serves as cofactor.

It localises to the cell inner membrane. The protein resides in the cytoplasm. The enzyme catalyses ATP + H2O + cellular proteinSide 1 = ADP + phosphate + cellular proteinSide 2.. Functionally, part of the Sec protein translocase complex. Interacts with the SecYEG preprotein conducting channel. Has a central role in coupling the hydrolysis of ATP to the transfer of proteins into and across the cell membrane, serving both as a receptor for the preprotein-SecB complex and as an ATP-driven molecular motor driving the stepwise translocation of polypeptide chains across the membrane. The sequence is that of Protein translocase subunit SecA from Francisella tularensis subsp. tularensis (strain WY96-3418).